The primary structure comprises 299 residues: Homeobox protein ceh-24 (299 aa).

Positions 1-35 (MSEKETPSPVLDVKKEKNEETGIDEEKSSEDDCSK) are enriched in basic and acidic residues. Disordered stretches follow at residues 1-45 (MSEK…NPSK) and 208-263 (QEKE…SGVF). Positions 150-209 (RRKRRVLFSQAQVYELERRFKQAKYLTAPEREQLANSIRLTPTQVKIWFQNHRYKCKRQE) form a DNA-binding region, homeobox. The span at 242–252 (DDKDDEEEEES) shows a compositional bias: acidic residues.

The protein belongs to the NK-2 homeobox family. As to expression, expressed in the 8 vulval muscles, 8-10 ventral neurons in the head and in the most posterior pharyngeal muscle cell, m8. Expressed in SIA, SIB and SMB sublateral motor neurons, and in muscles of the pharynx and vulva.

The protein localises to the nucleus. Its function is as follows. Probable transcriptional regulator that is required in neural development for the normal formation of sublateral cholinergic motor neuron processes. Plays a role in regulating the expression of acetylcholine transporter protein unc-17 in the sublateral processes. In particular, it is required in sublateral motor neurons for a left-right turning behavior that occurs during the lethargus phase of the normal sleep process called 'flipping'. During 'flipping' animals rotate 180 degrees about their longitudinal axis. The polypeptide is Homeobox protein ceh-24 (Caenorhabditis elegans).